Here is a 131-residue protein sequence, read N- to C-terminus: Histone H2B.1 (131 aa).

Positions 1-19 (MSAKAEKKPASKAPAEKKP) are enriched in basic and acidic residues. The tract at residues 1-38 (MSAKAEKKPASKAPAEKKPAAKKTSTSTDGKKRSKARK) is disordered. Residues Lys-7 and Lys-8 each carry the N6-acetyllysine; alternate modification. Residues Lys-7 and Lys-8 each participate in a glycyl lysine isopeptide (Lys-Gly) (interchain with G-Cter in SUMO); alternate cross-link. Position 11 is a phosphoserine (Ser-11). Residue Lys-12 is modified to N6-acetyllysine. Lys-17, Lys-18, Lys-22, and Lys-23 each carry N6-acetyllysine; alternate. Residues Lys-17 and Lys-18 each participate in a glycyl lysine isopeptide (Lys-Gly) (interchain with G-Cter in SUMO); alternate cross-link. Residue Lys-22 is modified to N6-butyryllysine; alternate. Residue Lys-23 is modified to N6-methyllysine; alternate. Lys-35 carries the post-translational modification N6-succinyllysine. An N6,N6-dimethyllysine modification is found at Lys-38. Lys-47 carries the post-translational modification N6-succinyllysine. A Glycyl lysine isopeptide (Lys-Gly) (interchain with G-Cter in ubiquitin) cross-link involves residue Lys-124.

This sequence belongs to the histone H2B family. As to quaternary structure, the nucleosome is a histone octamer containing two molecules each of H2A, H2B, H3 and H4 assembled in one H3-H4 heterotetramer and two H2A-H2B heterodimers. The octamer wraps approximately 147 bp of DNA. Monoubiquitinated by the RAD6/UBC2-BRE1 complex to form H2BK123ub1. H2BK123ub1 gives a specific tag for epigenetic transcriptional activation and is also prerequisite for H3K4me and H3K79me formation. H2BK123ub1 also modulates the formation of double-strand breaks during meiosis and is a prerequisite for DNA-damage checkpoint activation. Deubiquitination is performed by UBP8 in presence of SGF11. In terms of processing, phosphorylated by STE20 to form H2BS10ph during progression through meiotic prophase. May be correlated with chromosome condensation. H2BS10ph is also formed after H(2)O(2) treatment, and is a step leading to apoptosis. Post-translationally, acetylated by GCN5, a component of the SAGA complex, to form H2BK11ac and H2BK16ac. H2BK16ac can also be formed by ESA1, a component of the NuA4 histone acetyltransferase (HAT) complex. Acetylation of N-terminal lysines and particularly formation of H2BK11acK16ac has a positive effect on transcription. Sumoylation to form H2BK6su or H2BK7su, and probably also H2BK16su or H2BK17su, occurs preferentially near the telomeres and represses gene transcription.

Its subcellular location is the nucleus. It is found in the chromosome. Its function is as follows. Core component of nucleosome. Nucleosomes wrap and compact DNA into chromatin, limiting DNA accessibility to the cellular machineries which require DNA as a template. Histones thereby play a central role in transcription regulation, DNA repair, DNA replication and chromosomal stability. DNA accessibility is regulated via a complex set of post-translational modifications of histones, also called histone code, and nucleosome remodeling. The protein is Histone H2B.1 (HTB1) of Saccharomyces cerevisiae (strain ATCC 204508 / S288c) (Baker's yeast).